We begin with the raw amino-acid sequence, 243 residues long: Ubiquinone biosynthesis O-methyltransferase (243 aa).

S-adenosyl-L-methionine contacts are provided by arginine 45, glycine 65, aspartate 86, and leucine 130.

The protein belongs to the methyltransferase superfamily. UbiG/COQ3 family.

The enzyme catalyses a 3-demethylubiquinol + S-adenosyl-L-methionine = a ubiquinol + S-adenosyl-L-homocysteine + H(+). The catalysed reaction is a 3-(all-trans-polyprenyl)benzene-1,2-diol + S-adenosyl-L-methionine = a 2-methoxy-6-(all-trans-polyprenyl)phenol + S-adenosyl-L-homocysteine + H(+). Its pathway is cofactor biosynthesis; ubiquinone biosynthesis. O-methyltransferase that catalyzes the 2 O-methylation steps in the ubiquinone biosynthetic pathway. The protein is Ubiquinone biosynthesis O-methyltransferase of Idiomarina loihiensis (strain ATCC BAA-735 / DSM 15497 / L2-TR).